Reading from the N-terminus, the 284-residue chain is L-ribulose-5-phosphate 3-epimerase UlaE (284 aa).

The protein belongs to the L-ribulose-5-phosphate 3-epimerase family.

It carries out the reaction L-ribulose 5-phosphate = L-xylulose 5-phosphate. It functions in the pathway cofactor degradation; L-ascorbate degradation; D-xylulose 5-phosphate from L-ascorbate: step 3/4. Functionally, catalyzes the isomerization of L-xylulose-5-phosphate to L-ribulose-5-phosphate. Is involved in the anaerobic L-ascorbate utilization. The chain is L-ribulose-5-phosphate 3-epimerase UlaE from Salmonella typhi.